We begin with the raw amino-acid sequence, 145 residues long: Transcription antitermination protein NusB (145 aa).

This sequence belongs to the NusB family.

Functionally, involved in transcription antitermination. Required for transcription of ribosomal RNA (rRNA) genes. Binds specifically to the boxA antiterminator sequence of the ribosomal RNA (rrn) operons. This chain is Transcription antitermination protein NusB, found in Aromatoleum aromaticum (strain DSM 19018 / LMG 30748 / EbN1) (Azoarcus sp. (strain EbN1)).